A 213-amino-acid chain; its full sequence is Adenylate kinase (213 aa).

10–15 is an ATP binding site; sequence GSGKGT. Residues 30 to 59 form an NMP region; the sequence is SVGDLLRNIISSSSELGKKIKGTVESGNLI. AMP is bound by residues arginine 36, 57 to 59, 83 to 86, and glutamine 90; these read NLI and GFPR. The LID stretch occupies residues 125–160; it reads NRLACLDCKNIYSVSSFKSTTCAKCKSTRLEKRIDD. Position 126 (arginine 126) interacts with ATP. Residues cysteine 129 and cysteine 132 each contribute to the Zn(2+) site. 135 to 136 lines the ATP pocket; that stretch reads IY. Residues cysteine 146 and cysteine 149 each contribute to the Zn(2+) site. 2 residues coordinate AMP: arginine 157 and arginine 169. Leucine 195 contributes to the ATP binding site.

It belongs to the adenylate kinase family. As to quaternary structure, monomer.

Its subcellular location is the cytoplasm. The catalysed reaction is AMP + ATP = 2 ADP. It functions in the pathway purine metabolism; AMP biosynthesis via salvage pathway; AMP from ADP: step 1/1. Functionally, catalyzes the reversible transfer of the terminal phosphate group between ATP and AMP. Plays an important role in cellular energy homeostasis and in adenine nucleotide metabolism. This Wolbachia pipientis wMel protein is Adenylate kinase.